A 1183-amino-acid polypeptide reads, in one-letter code: M-phase phosphoprotein 9 (1183 aa).

Disordered regions lie at residues 28-52, 300-334, and 472-495; these read GLNL…SGKT, KLKQ…EKSD, and ISFS…SFSQ. Positions 324-334 are enriched in basic and acidic residues; it reads QSKKTPIEKSD. A required for its centrosomal localization region spans residues 401-800; that stretch reads TSNEMKLPSL…EAQVKQVEHE (400 aa). Residues 451-500 are interaction with CEP97; the sequence is KPKQQISGIQPHGLPNALDDRISFSPDSVLEPSMSSPSDIDSFSQASNVT. Residues 483–495 show a composition bias toward low complexity; the sequence is SMSSPSDIDSFSQ. Residues 609–804 adopt a coiled-coil conformation; that stretch reads DLRAYYESEI…KQVEHENMLS (196 aa). Ser-781 is subject to Phosphoserine; by TTBK2. Lys-784 participates in a covalent cross-link: Glycyl lysine isopeptide (Lys-Gly) (interchain with G-Cter in ubiquitin). Ser-788 carries the phosphoserine; by TTBK2 modification. The tract at residues 801-1031 is interaction with KIF24; sequence NMLSLRHNSR…PVSTLQRTNP (231 aa). Disordered stretches follow at residues 863-894 and 910-999; these read LGHR…SDTP and NWGT…GFSH. Positions 921 to 936 are enriched in polar residues; sequence SNINPRQTETSVNASR. A compositionally biased stretch (low complexity) spans 949 to 967; it reads LNSASQRSSSLPPSNRKSS. At Ser-994 the chain carries Phosphoserine. Residues 1109–1174 are a coiled coil; the sequence is RTLAETERFF…GSVRMTLKKF (66 aa).

In terms of assembly, interacts with CCP110, CEP97 and KIF24. In terms of processing, TTBK2-mediated phosphorylation at Ser-781 and Ser-788, promotes its ubiquitination at Lys-784 leading to proteasomal degradation, loss of MPHOSPH9 facilitates the removal of the CP110-CEP97 complex from the mother centrioles, promoting the initiation of ciliogenesis. Phosphorylated in M (mitotic) phase. Ubiquitinated at Lys-784, leading to proteasomal degradation.

The protein localises to the cytoplasm. Its subcellular location is the cytoskeleton. It localises to the microtubule organizing center. It is found in the centrosome. The protein resides in the centriole. The protein localises to the golgi apparatus membrane. In terms of biological role, negatively regulates cilia formation by recruiting the CP110-CEP97 complex (a negative regulator of ciliogenesis) at the distal end of the mother centriole in ciliary cells. At the beginning of cilia formation, MPHOSPH9 undergoes TTBK2-mediated phosphorylation and degradation via the ubiquitin-proteasome system and removes itself and the CP110-CEP97 complex from the distal end of the mother centriole, which subsequently promotes cilia formation. This Homo sapiens (Human) protein is M-phase phosphoprotein 9 (MPHOSPH9).